A 137-amino-acid polypeptide reads, in one-letter code: Endoribonuclease YbeY (137 aa).

Residues H103, H107, and H113 each contribute to the Zn(2+) site.

The protein belongs to the endoribonuclease YbeY family. The cofactor is Zn(2+).

It is found in the cytoplasm. Single strand-specific metallo-endoribonuclease involved in late-stage 70S ribosome quality control and in maturation of the 3' terminus of the 16S rRNA. In Acholeplasma laidlawii (strain PG-8A), this protein is Endoribonuclease YbeY.